We begin with the raw amino-acid sequence, 339 residues long: 3-isopropylmalate dehydrogenase (339 aa).

Arginine 88, arginine 98, arginine 122, and aspartate 212 together coordinate substrate. Mg(2+) contacts are provided by aspartate 212, aspartate 236, and aspartate 240. 272–284 (GSAPDIAGQGIAD) is an NAD(+) binding site.

Belongs to the isocitrate and isopropylmalate dehydrogenases family. LeuB type 2 subfamily. Homodimer. Requires Mg(2+) as cofactor. The cofactor is Mn(2+).

The protein resides in the cytoplasm. It catalyses the reaction (2R,3S)-3-isopropylmalate + NAD(+) = 4-methyl-2-oxopentanoate + CO2 + NADH. It functions in the pathway amino-acid biosynthesis; L-leucine biosynthesis; L-leucine from 3-methyl-2-oxobutanoate: step 3/4. In terms of biological role, catalyzes the oxidation of 3-carboxy-2-hydroxy-4-methylpentanoate (3-isopropylmalate) to 3-carboxy-4-methyl-2-oxopentanoate. The product decarboxylates to 4-methyl-2 oxopentanoate. This chain is 3-isopropylmalate dehydrogenase, found in Corynebacterium urealyticum (strain ATCC 43042 / DSM 7109).